The following is a 363-amino-acid chain: S-adenosylmethionine:tRNA ribosyltransferase-isomerase (363 aa).

This sequence belongs to the QueA family. Monomer.

The protein resides in the cytoplasm. The enzyme catalyses 7-aminomethyl-7-carbaguanosine(34) in tRNA + S-adenosyl-L-methionine = epoxyqueuosine(34) in tRNA + adenine + L-methionine + 2 H(+). It functions in the pathway tRNA modification; tRNA-queuosine biosynthesis. In terms of biological role, transfers and isomerizes the ribose moiety from AdoMet to the 7-aminomethyl group of 7-deazaguanine (preQ1-tRNA) to give epoxyqueuosine (oQ-tRNA). This chain is S-adenosylmethionine:tRNA ribosyltransferase-isomerase, found in Brucella anthropi (strain ATCC 49188 / DSM 6882 / CCUG 24695 / JCM 21032 / LMG 3331 / NBRC 15819 / NCTC 12168 / Alc 37) (Ochrobactrum anthropi).